Reading from the N-terminus, the 122-residue chain is Large ribosomal subunit protein uL14 (122 aa).

It belongs to the universal ribosomal protein uL14 family. Part of the 50S ribosomal subunit. Forms a cluster with proteins L3 and L19. In the 70S ribosome, L14 and L19 interact and together make contacts with the 16S rRNA in bridges B5 and B8.

In terms of biological role, binds to 23S rRNA. Forms part of two intersubunit bridges in the 70S ribosome. This Acetivibrio thermocellus (strain ATCC 27405 / DSM 1237 / JCM 9322 / NBRC 103400 / NCIMB 10682 / NRRL B-4536 / VPI 7372) (Clostridium thermocellum) protein is Large ribosomal subunit protein uL14.